The sequence spans 216 residues: MLLFIDTANVDEIRAANALGVIAGVTTNPSLIAREGRDFAEVVKEITSIVDGPISAEVISLDAEGMMKEAVELAAIHPNIVIKIPMTTEGLKATRACMEKGIKTNVTLIFSANQALLAARAGATYVSPFVGRLDDIGQDGIGLIYDIADIFNNYDLATQIISASIRHPLHVQQSAKAGAHIATVPYKVLLQMAKHPLTDKGIDAFLADWAKLTPKA.

Lys-83 functions as the Schiff-base intermediate with substrate in the catalytic mechanism.

Belongs to the transaldolase family. Type 3B subfamily.

Its subcellular location is the cytoplasm. It carries out the reaction D-sedoheptulose 7-phosphate + D-glyceraldehyde 3-phosphate = D-erythrose 4-phosphate + beta-D-fructose 6-phosphate. Its pathway is carbohydrate degradation; pentose phosphate pathway; D-glyceraldehyde 3-phosphate and beta-D-fructose 6-phosphate from D-ribose 5-phosphate and D-xylulose 5-phosphate (non-oxidative stage): step 2/3. Transaldolase is important for the balance of metabolites in the pentose-phosphate pathway. The protein is Probable transaldolase of Desulforamulus reducens (strain ATCC BAA-1160 / DSM 100696 / MI-1) (Desulfotomaculum reducens).